The following is an 82-amino-acid chain: Small ribosomal subunit protein bS16 (82 aa).

This sequence belongs to the bacterial ribosomal protein bS16 family.

This chain is Small ribosomal subunit protein bS16, found in Francisella philomiragia subsp. philomiragia (strain ATCC 25017 / CCUG 19701 / FSC 153 / O#319-036).